A 483-amino-acid polypeptide reads, in one-letter code: MGLFDFSVKELHDKLVKKEISPFDLVSESFNRIESVEDKVGSFITLNKEAAFGVAEELGDAGIDPNNMLAGLPIGIKDNIVTKSLRTTAASKILENFDPIYDATVVSKLKNAQTINIGKLNMDEFAMGSSTETSYFHKTHNPWDLSRVPGGSSGGSASAVAAGEVLFSLGSDTGGSIRQPAAFCGVVGMKPTYGRVSRFGLIAFASSLDQIGPITKNVEDNAYLLEAISGLDANDSTSINQPVERFSDSLTGDIKGLRIGVPKEYLGEGVDPGVKQAVLDALKTLEKLGATWDEVSLPHSEYGVASYYILASSEASSNLSRFDGVRYGYRSPNATTLEELYTKTRSEGFGDEVKRRIMLGTYALSSGYYDAYYKKAQQARTLIKQDFVNVFENYDVIIGPSSPTTAFKIDGMINDPITMYSNDILTVPINLAGVPAISVPCGFSDGLPVGLQIIGNYFEESLLYKVAHAFEQETTFHKEKPNL.

Active-site charge relay system residues include Lys77 and Ser152. The active-site Acyl-ester intermediate is Ser176.

Belongs to the amidase family. GatA subfamily. Heterotrimer of A, B and C subunits.

It carries out the reaction L-glutamyl-tRNA(Gln) + L-glutamine + ATP + H2O = L-glutaminyl-tRNA(Gln) + L-glutamate + ADP + phosphate + H(+). Its function is as follows. Allows the formation of correctly charged Gln-tRNA(Gln) through the transamidation of misacylated Glu-tRNA(Gln) in organisms which lack glutaminyl-tRNA synthetase. The reaction takes place in the presence of glutamine and ATP through an activated gamma-phospho-Glu-tRNA(Gln). The polypeptide is Glutamyl-tRNA(Gln) amidotransferase subunit A (Listeria monocytogenes serotype 4a (strain HCC23)).